A 68-amino-acid polypeptide reads, in one-letter code: Large ribosomal subunit protein bL31 (68 aa).

4 residues coordinate Zn(2+): Cys-16, Cys-18, Cys-37, and Cys-40.

The protein belongs to the bacterial ribosomal protein bL31 family. Type A subfamily. In terms of assembly, part of the 50S ribosomal subunit. The cofactor is Zn(2+).

Binds the 23S rRNA. This chain is Large ribosomal subunit protein bL31, found in Nitrosococcus oceani (strain ATCC 19707 / BCRC 17464 / JCM 30415 / NCIMB 11848 / C-107).